A 570-amino-acid chain; its full sequence is Endo-1,4-beta-xylanase 5-like (570 aa).

Residues 1–23 (MNSIKNGFFLCMIFLLWCHVDSG) form the signal peptide. Residues N197, N261, and N307 are each glycosylated (N-linked (GlcNAc...) asparagine). A GH10 domain is found at 202–501 (KGVVISLKQT…TQTGDVIDKL (300 aa)). E332 functions as the Proton donor in the catalytic mechanism. N-linked (GlcNAc...) asparagine glycosylation occurs at N346. E439 acts as the Nucleophile in catalysis. N490, N515, N537, and N545 each carry an N-linked (GlcNAc...) asparagine glycan.

This sequence belongs to the glycosyl hydrolase 10 (cellulase F) family.

It carries out the reaction Endohydrolysis of (1-&gt;4)-beta-D-xylosidic linkages in xylans.. It functions in the pathway glycan degradation; xylan degradation. Binds to and hydrolyzes insoluble and soluble xylan substrates. This is Endo-1,4-beta-xylanase 5-like from Arabidopsis thaliana (Mouse-ear cress).